Here is a 445-residue protein sequence, read N- to C-terminus: Argininosuccinate synthase (445 aa).

ATP contacts are provided by residues 17–25 (AFSGGLDTS) and Ala-43. Tyr-99 contributes to the L-citrulline binding site. ATP contacts are provided by Gly-129 and Thr-131. Residues Thr-131, Asn-135, and Asp-136 each contribute to the L-aspartate site. Asn-135 is a binding site for L-citrulline. Asp-136 is a binding site for ATP. Residues Arg-139 and Ser-192 each coordinate L-citrulline. An ATP-binding site is contributed by Asp-194. Residues Thr-201, Glu-203, and Glu-280 each coordinate L-citrulline.

The protein belongs to the argininosuccinate synthase family. Type 2 subfamily. As to quaternary structure, homotetramer.

It localises to the cytoplasm. The enzyme catalyses L-citrulline + L-aspartate + ATP = 2-(N(omega)-L-arginino)succinate + AMP + diphosphate + H(+). It participates in amino-acid biosynthesis; L-arginine biosynthesis; L-arginine from L-ornithine and carbamoyl phosphate: step 2/3. This is Argininosuccinate synthase from Burkholderia cenocepacia (strain HI2424).